A 149-amino-acid polypeptide reads, in one-letter code: Large ribosomal subunit protein bL9 (149 aa).

The protein belongs to the bacterial ribosomal protein bL9 family.

Functionally, binds to the 23S rRNA. The chain is Large ribosomal subunit protein bL9 from Bacillus pumilus (strain SAFR-032).